A 185-amino-acid chain; its full sequence is Threonylcarbamoyl-AMP synthase (185 aa).

One can recognise a YrdC-like domain in the interval 4-185 (SFRVQQAARE…LATGEVVRPG (182 aa)).

Belongs to the SUA5 family. TsaC subfamily.

The protein resides in the cytoplasm. The catalysed reaction is L-threonine + hydrogencarbonate + ATP = L-threonylcarbamoyladenylate + diphosphate + H2O. Required for the formation of a threonylcarbamoyl group on adenosine at position 37 (t(6)A37) in tRNAs that read codons beginning with adenine. Catalyzes the conversion of L-threonine, HCO(3)(-)/CO(2) and ATP to give threonylcarbamoyl-AMP (TC-AMP) as the acyladenylate intermediate, with the release of diphosphate. This chain is Threonylcarbamoyl-AMP synthase, found in Pseudomonas putida (strain ATCC 47054 / DSM 6125 / CFBP 8728 / NCIMB 11950 / KT2440).